We begin with the raw amino-acid sequence, 102 residues long: Hypersensitivity to hygromycin-B protein 1 (102 aa).

A signal peptide spans 1-17 (MSLSFLLFSPFLPPCFS). Residues 18-38 (SISICLSVLSTVSFFFAFTIP) traverse the membrane as a helical segment. The Cytoplasmic portion of the chain corresponds to 39–69 (HYVLRCGSVDEWHIHSSAEDFRTQRCVCAVK). The chain crosses the membrane as a helical span at residues 70 to 90 (LSASLLGCLLACASWSLLLEV). Residues 91 to 102 (SRIKWHVGTAYS) lie on the Extracellular side of the membrane.

It localises to the membrane. In terms of biological role, involved in vacuolar trafficking. The chain is Hypersensitivity to hygromycin-B protein 1 from Saccharomyces cerevisiae (strain ATCC 204508 / S288c) (Baker's yeast).